A 179-amino-acid chain; its full sequence is Large ribosomal subunit protein uL6 (179 aa).

This sequence belongs to the universal ribosomal protein uL6 family. As to quaternary structure, part of the 50S ribosomal subunit.

In terms of biological role, this protein binds to the 23S rRNA, and is important in its secondary structure. It is located near the subunit interface in the base of the L7/L12 stalk, and near the tRNA binding site of the peptidyltransferase center. This is Large ribosomal subunit protein uL6 from Bacillus velezensis (strain DSM 23117 / BGSC 10A6 / LMG 26770 / FZB42) (Bacillus amyloliquefaciens subsp. plantarum).